The following is a 381-amino-acid chain: Putative glutamate--cysteine ligase 2 (381 aa).

Belongs to the glutamate--cysteine ligase type 2 family. YbdK subfamily.

The catalysed reaction is L-cysteine + L-glutamate + ATP = gamma-L-glutamyl-L-cysteine + ADP + phosphate + H(+). Its function is as follows. ATP-dependent carboxylate-amine ligase which exhibits weak glutamate--cysteine ligase activity. The polypeptide is Putative glutamate--cysteine ligase 2 (Polaromonas naphthalenivorans (strain CJ2)).